The primary structure comprises 877 residues: Alanine--tRNA ligase (877 aa).

Residues His-564, His-568, Cys-666, and His-670 each contribute to the Zn(2+) site.

It belongs to the class-II aminoacyl-tRNA synthetase family. Zn(2+) serves as cofactor.

Its subcellular location is the cytoplasm. The enzyme catalyses tRNA(Ala) + L-alanine + ATP = L-alanyl-tRNA(Ala) + AMP + diphosphate. Its function is as follows. Catalyzes the attachment of alanine to tRNA(Ala) in a two-step reaction: alanine is first activated by ATP to form Ala-AMP and then transferred to the acceptor end of tRNA(Ala). Also edits incorrectly charged Ser-tRNA(Ala) and Gly-tRNA(Ala) via its editing domain. The chain is Alanine--tRNA ligase from Pelotomaculum thermopropionicum (strain DSM 13744 / JCM 10971 / SI).